A 460-amino-acid polypeptide reads, in one-letter code: ATP synthase subunit beta (460 aa).

Residue G150–T157 participates in ATP binding.

It belongs to the ATPase alpha/beta chains family. F-type ATPases have 2 components, CF(1) - the catalytic core - and CF(0) - the membrane proton channel. CF(1) has five subunits: alpha(3), beta(3), gamma(1), delta(1), epsilon(1). CF(0) has three main subunits: a(1), b(2) and c(9-12). The alpha and beta chains form an alternating ring which encloses part of the gamma chain. CF(1) is attached to CF(0) by a central stalk formed by the gamma and epsilon chains, while a peripheral stalk is formed by the delta and b chains.

The protein localises to the cell inner membrane. The catalysed reaction is ATP + H2O + 4 H(+)(in) = ADP + phosphate + 5 H(+)(out). Produces ATP from ADP in the presence of a proton gradient across the membrane. The catalytic sites are hosted primarily by the beta subunits. The sequence is that of ATP synthase subunit beta from Salmonella gallinarum (strain 287/91 / NCTC 13346).